Reading from the N-terminus, the 455-residue chain is E3 ubiquitin-protein ligase IPI1 (455 aa).

Residues 1–42 (MGAEEEEEPASAVGREGGGGGGGARAAGAGAGGDTADDDDSG) form a disordered region. A compositionally biased stretch (gly residues) spans 15-33 (REGGGGGGGARAAGAGAGG). The segment at 51-97 (CSICLDAVVAGGGDRSTARLQCGHEFHLDCIGSAFNAKGVMQCPNCR) adopts an RING-type; atypical zinc-finger fold. 2 disordered regions span residues 286 to 311 (LDSD…SRIP) and 426 to 455 (QWIG…IPRM). Residues 433-442 (SPPPPPPPPA) show a composition bias toward pro residues.

As to quaternary structure, interacts with SPL14/IPA1.

The protein localises to the nucleus. It carries out the reaction S-ubiquitinyl-[E2 ubiquitin-conjugating enzyme]-L-cysteine + [acceptor protein]-L-lysine = [E2 ubiquitin-conjugating enzyme]-L-cysteine + N(6)-ubiquitinyl-[acceptor protein]-L-lysine.. It participates in protein modification; protein ubiquitination. Functions as an E3 ligase that promotes polyubiquitination of SPL14/IPA1 for subsequent proteasomal degradation. Regulates plant architecture by modulating SPL14/IPA1 abundance. Promotes the degradation of SPL14/IPA1 in panicles, while it stabilizes SPL14/IPA1 in shoot apices. Ubiquitinates the SPL14/IPA1-mediated complex with 'Lys-48'-linked polyubiquitin in panicles and 'Lys-63'-linked polyubiquitin chains in the shoot apex. This is E3 ubiquitin-protein ligase IPI1 from Oryza sativa subsp. japonica (Rice).